The primary structure comprises 516 residues: Apolipoprotein N-acyltransferase (516 aa).

5 helical membrane passes run 23 to 43 (ILILLLAAALAGAFTLFAFAP), 68 to 88 (AFWLGYAWGLGAYVSNFRWIY), 94 to 114 (VAGLPAWIAAPLVLLLPAYLA), 135 to 155 (WLLAFPAAWELGEWLRGWVMT), and 178 to 198 (LGGIHLVNYLVALSAAALAML). Positions 241–481 (AQGNIAQELK…VLTGFAQSRQ (241 aa)) constitute a CN hydrolase domain. The Proton acceptor role is filled by Glu-279. The active site involves Lys-339. The active-site Nucleophile is Cys-391. Residues 489 to 509 (FGNLPVVLGCGALLLLALLLG) form a helical membrane-spanning segment.

Belongs to the CN hydrolase family. Apolipoprotein N-acyltransferase subfamily.

Its subcellular location is the cell inner membrane. It catalyses the reaction N-terminal S-1,2-diacyl-sn-glyceryl-L-cysteinyl-[lipoprotein] + a glycerophospholipid = N-acyl-S-1,2-diacyl-sn-glyceryl-L-cysteinyl-[lipoprotein] + a 2-acyl-sn-glycero-3-phospholipid + H(+). It functions in the pathway protein modification; lipoprotein biosynthesis (N-acyl transfer). Catalyzes the phospholipid dependent N-acylation of the N-terminal cysteine of apolipoprotein, the last step in lipoprotein maturation. This is Apolipoprotein N-acyltransferase from Chromobacterium violaceum (strain ATCC 12472 / DSM 30191 / JCM 1249 / CCUG 213 / NBRC 12614 / NCIMB 9131 / NCTC 9757 / MK).